A 128-amino-acid polypeptide reads, in one-letter code: Azurin (128 aa).

In terms of domain architecture, Plastocyanin-like spans 1 to 128 (AECKVTVDST…AMMKGTVTLK (128 aa)). An intrachain disulfide couples C3 to C26. 4 residues coordinate Cu cation: H46, C112, H117, and M121.

The protein resides in the periplasm. Transfers electrons from cytochrome c551 to cytochrome oxidase. This is Azurin from Pseudomonas fluorescens biotype C.